Consider the following 343-residue polypeptide: UDP-N-acetylglucosamine--N-acetylmuramyl-(pentapeptide) pyrophosphoryl-undecaprenol N-acetylglucosamine transferase (343 aa).

Residues 10–12 (TGG), N113, S174, and Q275 contribute to the UDP-N-acetyl-alpha-D-glucosamine site.

The protein belongs to the glycosyltransferase 28 family. MurG subfamily.

Its subcellular location is the cell membrane. The enzyme catalyses di-trans,octa-cis-undecaprenyl diphospho-N-acetyl-alpha-D-muramoyl-L-alanyl-D-glutamyl-meso-2,6-diaminopimeloyl-D-alanyl-D-alanine + UDP-N-acetyl-alpha-D-glucosamine = di-trans,octa-cis-undecaprenyl diphospho-[N-acetyl-alpha-D-glucosaminyl-(1-&gt;4)]-N-acetyl-alpha-D-muramoyl-L-alanyl-D-glutamyl-meso-2,6-diaminopimeloyl-D-alanyl-D-alanine + UDP + H(+). It participates in cell wall biogenesis; peptidoglycan biosynthesis. Its function is as follows. Cell wall formation. Catalyzes the transfer of a GlcNAc subunit on undecaprenyl-pyrophosphoryl-MurNAc-pentapeptide (lipid intermediate I) to form undecaprenyl-pyrophosphoryl-MurNAc-(pentapeptide)GlcNAc (lipid intermediate II). The polypeptide is UDP-N-acetylglucosamine--N-acetylmuramyl-(pentapeptide) pyrophosphoryl-undecaprenol N-acetylglucosamine transferase (Wolbachia sp. subsp. Brugia malayi (strain TRS)).